A 111-amino-acid chain; its full sequence is Cytochrome c-550 (111 aa).

Positions 13, 16, 17, and 90 each coordinate heme c.

Post-translationally, binds 1 heme c group covalently per subunit.

The sequence is that of Cytochrome c-550 from Novispirillum itersonii (Aquaspirillum itersonii).